Reading from the N-terminus, the 242-residue chain is Phosphoribosylaminoimidazole-succinocarboxamide synthase (242 aa).

The protein belongs to the SAICAR synthetase family.

The enzyme catalyses 5-amino-1-(5-phospho-D-ribosyl)imidazole-4-carboxylate + L-aspartate + ATP = (2S)-2-[5-amino-1-(5-phospho-beta-D-ribosyl)imidazole-4-carboxamido]succinate + ADP + phosphate + 2 H(+). It functions in the pathway purine metabolism; IMP biosynthesis via de novo pathway; 5-amino-1-(5-phospho-D-ribosyl)imidazole-4-carboxamide from 5-amino-1-(5-phospho-D-ribosyl)imidazole-4-carboxylate: step 1/2. In Methanocaldococcus jannaschii (strain ATCC 43067 / DSM 2661 / JAL-1 / JCM 10045 / NBRC 100440) (Methanococcus jannaschii), this protein is Phosphoribosylaminoimidazole-succinocarboxamide synthase (purC).